A 196-amino-acid polypeptide reads, in one-letter code: MKLNLNTDFTKFPRAVSVLAAGEAGAAPAFAKAVLAHDERHLRRRAVELTDGSKVLVDLPEPVALNDGDRLVLEDGRHVEIIAAPEEVYDIRARDGVHLTELAWHIGNRHLAAGIEADRIVILRDHVIKAMLEGLGATVREVSEPFKPVRGAYSGGHDHGHAHAHSHAEAHSHAHGESHSHSHSHSHDDHHHHDHD.

The disordered stretch occupies residues 150 to 196 (RGAYSGGHDHGHAHAHSHAEAHSHAHGESHSHSHSHSHDDHHHHDHD). The segment covering 156-196 (GHDHGHAHAHSHAEAHSHAHGESHSHSHSHSHDDHHHHDHD) has biased composition (basic and acidic residues).

Belongs to the UreE family.

Its subcellular location is the cytoplasm. Involved in urease metallocenter assembly. Binds nickel. Probably functions as a nickel donor during metallocenter assembly. In Mesorhizobium japonicum (strain LMG 29417 / CECT 9101 / MAFF 303099) (Mesorhizobium loti (strain MAFF 303099)), this protein is Urease accessory protein UreE.